Consider the following 488-residue polypeptide: Glutamate--tRNA ligase (488 aa).

Positions 8 to 18 (PSPTGPLHIGG) match the 'HIGH' region motif. Zn(2+) is bound by residues Cys105, Cys107, Cys132, and His134. The 'KMSKS' region motif lies at 249–253 (KMSKR). Lys252 serves as a coordination point for ATP.

Belongs to the class-I aminoacyl-tRNA synthetase family. Glutamate--tRNA ligase type 1 subfamily. In terms of assembly, monomer. The cofactor is Zn(2+).

It is found in the cytoplasm. The enzyme catalyses tRNA(Glu) + L-glutamate + ATP = L-glutamyl-tRNA(Glu) + AMP + diphosphate. In terms of biological role, catalyzes the attachment of glutamate to tRNA(Glu) in a two-step reaction: glutamate is first activated by ATP to form Glu-AMP and then transferred to the acceptor end of tRNA(Glu). The protein is Glutamate--tRNA ligase of Desulfitobacterium hafniense (strain Y51).